The primary structure comprises 417 residues: Probable secreted beta-glucosidase PSU1 (417 aa).

An N-terminal signal peptide occupies residues 1–18 (MRFFETLALALLTTGALA).

Belongs to the SUN family.

The protein resides in the secreted. It is found in the cell wall. Its function is as follows. Involved in cell wall synthesis. May be required for the activation of 1,3-beta-glucan synthase. The protein is Probable secreted beta-glucosidase PSU1 (psu1) of Schizosaccharomyces pombe (strain 972 / ATCC 24843) (Fission yeast).